A 367-amino-acid chain; its full sequence is Innexin inx4 (367 aa).

Over 1 to 21 (MYAAVKPLSKYLQFKSVHIYD) the chain is Cytoplasmic. The chain crosses the membrane as a helical span at residues 22–42 (AIFTLHSKVTVALLLACTFLL). The Extracellular segment spans residues 43-110 (SSKQYFGDPI…PENRNYITYY (68 aa)). A helical membrane pass occupies residues 111–131 (QWVVLVLLLESFVFYMPAFLW). Residues 132–186 (KIWEGGRLKHLCDDFHKMAVCKDKSRTHLRVLVNYFSSDYKETHFRYFVSYVFCE) are Cytoplasmic-facing. The helical transmembrane segment at 187–207 (ILNLSISILNFLLLDVFFGGF) threads the bilayer. Residues 208-268 (WGRYRNALLS…LLPLNILNEK (61 aa)) lie on the Extracellular side of the membrane. The chain crosses the membrane as a helical span at residues 269-289 (IFAFLWIWFILVAMLISLKFL). At 290–367 (YRLATVLYPG…IKIPPGADKI (78 aa)) the chain is on the cytoplasmic side.

This sequence belongs to the pannexin family. In terms of tissue distribution, expressed in nurse cells and oocyte during oogenesis. Uniform expression in imaginal wing disk and low expression in developing imaginal CNS. Expressed in embryonic pole cells and primordial germ cells.

It is found in the cell membrane. The protein localises to the cell junction. The protein resides in the gap junction. Structural component of the gap junctions in germline cells. Required for differentiation and survival of germline cysts in females and of spermatogonia in males; gap junctional communication between spermatogonia and somatic cyst cells may be required for normal differentiation and survival of spermatogonia. In Drosophila melanogaster (Fruit fly), this protein is Innexin inx4 (zpg).